The following is a 254-amino-acid chain: Type III pantothenate kinase (254 aa).

6–13 (DVGNTNTV) lines the ATP pocket. Substrate-binding positions include Tyr100 and 107–110 (GADR). Asp109 (proton acceptor) is an active-site residue. K(+) is bound at residue Asp129. Thr132 contributes to the ATP binding site. Thr184 contacts substrate.

It belongs to the type III pantothenate kinase family. As to quaternary structure, homodimer. NH4(+) serves as cofactor. It depends on K(+) as a cofactor.

The protein resides in the cytoplasm. The catalysed reaction is (R)-pantothenate + ATP = (R)-4'-phosphopantothenate + ADP + H(+). Its pathway is cofactor biosynthesis; coenzyme A biosynthesis; CoA from (R)-pantothenate: step 1/5. Its function is as follows. Catalyzes the phosphorylation of pantothenate (Pan), the first step in CoA biosynthesis. In Syntrophus aciditrophicus (strain SB), this protein is Type III pantothenate kinase.